Reading from the N-terminus, the 320-residue chain is L-lactate dehydrogenase (320 aa).

Residues 15 to 16 (FV), Asp-37, Lys-42, Tyr-68, and 82 to 83 (GA) each bind NAD(+). Residues Gln-85, Arg-91, and 123–126 (NPVD) contribute to the substrate site. Residues 121–123 (ATN) and Ser-146 contribute to the NAD(+) site. 151 to 154 (DSAR) contributes to the substrate binding site. Beta-D-fructose 1,6-bisphosphate contacts are provided by residues Arg-156 and 168–172 (QNVHA). The active-site Proton acceptor is His-178. Position 223 is a phosphotyrosine (Tyr-223). Thr-232 contacts substrate.

The protein belongs to the LDH/MDH superfamily. LDH family. In terms of assembly, homotetramer.

It localises to the cytoplasm. The enzyme catalyses (S)-lactate + NAD(+) = pyruvate + NADH + H(+). It participates in fermentation; pyruvate fermentation to lactate; (S)-lactate from pyruvate: step 1/1. Its activity is regulated as follows. Allosterically activated by fructose 1,6-bisphosphate (FBP). Functionally, catalyzes the conversion of lactate to pyruvate. This chain is L-lactate dehydrogenase, found in Bacillus subtilis (strain 168).